The chain runs to 252 residues: 1-(5-phosphoribosyl)-5-[(5-phosphoribosylamino)methylideneamino] imidazole-4-carboxamide isomerase (252 aa).

Asp-8 acts as the Proton acceptor in catalysis. Residue Asp-129 is the Proton donor of the active site.

It belongs to the HisA/HisF family.

Its subcellular location is the cytoplasm. The catalysed reaction is 1-(5-phospho-beta-D-ribosyl)-5-[(5-phospho-beta-D-ribosylamino)methylideneamino]imidazole-4-carboxamide = 5-[(5-phospho-1-deoxy-D-ribulos-1-ylimino)methylamino]-1-(5-phospho-beta-D-ribosyl)imidazole-4-carboxamide. Its pathway is amino-acid biosynthesis; L-histidine biosynthesis; L-histidine from 5-phospho-alpha-D-ribose 1-diphosphate: step 4/9. This Synechococcus sp. (strain RCC307) protein is 1-(5-phosphoribosyl)-5-[(5-phosphoribosylamino)methylideneamino] imidazole-4-carboxamide isomerase.